We begin with the raw amino-acid sequence, 83 residues long: MPKPDIHPTWYPDAKVICNGEVVMTTGATQPEIHVDVWSGNHPFFTGTQKILDTEGRVDRFMKKYGMGTKKKGADSAKAESKA.

This sequence belongs to the bacterial ribosomal protein bL31 family. Type A subfamily. In terms of assembly, part of the 50S ribosomal subunit.

Functionally, binds the 23S rRNA. The sequence is that of Large ribosomal subunit protein bL31 from Synechococcus sp. (strain CC9605).